We begin with the raw amino-acid sequence, 348 residues long: Holliday junction branch migration complex subunit RuvB (348 aa).

The tract at residues 1–183 (MTEASRIVAP…FGIPVRLNFY (183 aa)) is large ATPase domain (RuvB-L). ATP is bound by residues Leu-22, Arg-23, Gly-64, Lys-67, Thr-68, Thr-69, 130–132 (EDF), Arg-173, Tyr-183, and Arg-220. Residue Thr-68 coordinates Mg(2+). Positions 184-254 (TEDELEKIVS…VADHALGALE (71 aa)) are small ATPAse domain (RuvB-S). The interval 257–348 (AAGLDAMDRR…SGLFGQDEDR (92 aa)) is head domain (RuvB-H). Positions 293, 312, and 317 each coordinate DNA. The interval 329-348 (LTEPSRDPAQSGLFGQDEDR) is disordered.

Belongs to the RuvB family. In terms of assembly, homohexamer. Forms an RuvA(8)-RuvB(12)-Holliday junction (HJ) complex. HJ DNA is sandwiched between 2 RuvA tetramers; dsDNA enters through RuvA and exits via RuvB. An RuvB hexamer assembles on each DNA strand where it exits the tetramer. Each RuvB hexamer is contacted by two RuvA subunits (via domain III) on 2 adjacent RuvB subunits; this complex drives branch migration. In the full resolvosome a probable DNA-RuvA(4)-RuvB(12)-RuvC(2) complex forms which resolves the HJ.

The protein resides in the cytoplasm. The enzyme catalyses ATP + H2O = ADP + phosphate + H(+). The RuvA-RuvB-RuvC complex processes Holliday junction (HJ) DNA during genetic recombination and DNA repair, while the RuvA-RuvB complex plays an important role in the rescue of blocked DNA replication forks via replication fork reversal (RFR). RuvA specifically binds to HJ cruciform DNA, conferring on it an open structure. The RuvB hexamer acts as an ATP-dependent pump, pulling dsDNA into and through the RuvAB complex. RuvB forms 2 homohexamers on either side of HJ DNA bound by 1 or 2 RuvA tetramers; 4 subunits per hexamer contact DNA at a time. Coordinated motions by a converter formed by DNA-disengaged RuvB subunits stimulates ATP hydrolysis and nucleotide exchange. Immobilization of the converter enables RuvB to convert the ATP-contained energy into a lever motion, pulling 2 nucleotides of DNA out of the RuvA tetramer per ATP hydrolyzed, thus driving DNA branch migration. The RuvB motors rotate together with the DNA substrate, which together with the progressing nucleotide cycle form the mechanistic basis for DNA recombination by continuous HJ branch migration. Branch migration allows RuvC to scan DNA until it finds its consensus sequence, where it cleaves and resolves cruciform DNA. The polypeptide is Holliday junction branch migration complex subunit RuvB (Nitrobacter winogradskyi (strain ATCC 25391 / DSM 10237 / CIP 104748 / NCIMB 11846 / Nb-255)).